The chain runs to 337 residues: Holliday junction branch migration complex subunit RuvB (337 aa).

The interval 4 to 185 (ADRLISNSFE…FGITQRLEYY (182 aa)) is large ATPase domain (RuvB-L). ATP is bound by residues Ile-24, Arg-25, Gly-66, Lys-69, Thr-70, Thr-71, 132–134 (EDY), Arg-175, Tyr-185, and Arg-222. Mg(2+) is bound at residue Thr-70. Residues 186 to 256 (KVDDLKDIVQ…TAKKALDMLD (71 aa)) are small ATPAse domain (RuvB-S). A head domain (RuvB-H) region spans residues 259 to 337 (SSGFDYMDRK…HFGLDIPEAR (79 aa)). DNA is bound by residues Arg-314 and Arg-319.

It belongs to the RuvB family. Homohexamer. Forms an RuvA(8)-RuvB(12)-Holliday junction (HJ) complex. HJ DNA is sandwiched between 2 RuvA tetramers; dsDNA enters through RuvA and exits via RuvB. An RuvB hexamer assembles on each DNA strand where it exits the tetramer. Each RuvB hexamer is contacted by two RuvA subunits (via domain III) on 2 adjacent RuvB subunits; this complex drives branch migration. In the full resolvosome a probable DNA-RuvA(4)-RuvB(12)-RuvC(2) complex forms which resolves the HJ.

It localises to the cytoplasm. The catalysed reaction is ATP + H2O = ADP + phosphate + H(+). The RuvA-RuvB-RuvC complex processes Holliday junction (HJ) DNA during genetic recombination and DNA repair, while the RuvA-RuvB complex plays an important role in the rescue of blocked DNA replication forks via replication fork reversal (RFR). RuvA specifically binds to HJ cruciform DNA, conferring on it an open structure. The RuvB hexamer acts as an ATP-dependent pump, pulling dsDNA into and through the RuvAB complex. RuvB forms 2 homohexamers on either side of HJ DNA bound by 1 or 2 RuvA tetramers; 4 subunits per hexamer contact DNA at a time. Coordinated motions by a converter formed by DNA-disengaged RuvB subunits stimulates ATP hydrolysis and nucleotide exchange. Immobilization of the converter enables RuvB to convert the ATP-contained energy into a lever motion, pulling 2 nucleotides of DNA out of the RuvA tetramer per ATP hydrolyzed, thus driving DNA branch migration. The RuvB motors rotate together with the DNA substrate, which together with the progressing nucleotide cycle form the mechanistic basis for DNA recombination by continuous HJ branch migration. Branch migration allows RuvC to scan DNA until it finds its consensus sequence, where it cleaves and resolves cruciform DNA. This chain is Holliday junction branch migration complex subunit RuvB, found in Photobacterium profundum (strain SS9).